The chain runs to 69 residues: Sec-independent protein translocase protein TatA (69 aa).

Residues 1–21 (MFGLGTMEMVIILVIVLVIFG) traverse the membrane as a helical segment. The segment at 44–69 (NAEDDAPAEPEVSKPAAAESTEKKDA) is disordered.

Belongs to the TatA/E family. As to quaternary structure, the Tat system comprises two distinct complexes: a TatABC complex, containing multiple copies of TatA, TatB and TatC subunits, and a separate TatA complex, containing only TatA subunits. Substrates initially bind to the TatABC complex, which probably triggers association of the separate TatA complex to form the active translocon.

It is found in the cell inner membrane. Functionally, part of the twin-arginine translocation (Tat) system that transports large folded proteins containing a characteristic twin-arginine motif in their signal peptide across membranes. TatA could form the protein-conducting channel of the Tat system. The protein is Sec-independent protein translocase protein TatA of Magnetococcus marinus (strain ATCC BAA-1437 / JCM 17883 / MC-1).